Consider the following 305-residue polypeptide: L-lactate dehydrogenase (305 aa).

NAD(+) contacts are provided by residues valine 11, aspartate 32, lysine 37, and 76–77 (GV). Substrate is bound by residues glutamine 79, arginine 85, and 117-120 (NPVD). NAD(+) is bound by residues 115–117 (ATN) and serine 140. 145–148 (DTAR) is a substrate binding site. Beta-D-fructose 1,6-bisphosphate-binding residues include arginine 150 and histidine 165. Catalysis depends on histidine 172, which acts as the Proton acceptor. At tyrosine 218 the chain carries Phosphotyrosine. Threonine 227 lines the substrate pocket.

It belongs to the LDH/MDH superfamily. LDH family. In terms of assembly, homotetramer.

It is found in the cytoplasm. It catalyses the reaction (S)-lactate + NAD(+) = pyruvate + NADH + H(+). The protein operates within fermentation; pyruvate fermentation to lactate; (S)-lactate from pyruvate: step 1/1. Allosterically activated by fructose 1,6-bisphosphate (FBP). Functionally, catalyzes the conversion of lactate to pyruvate. The polypeptide is L-lactate dehydrogenase (Chloroherpeton thalassium (strain ATCC 35110 / GB-78)).